We begin with the raw amino-acid sequence, 87 residues long: Large ribosomal subunit protein eL31 (87 aa).

Belongs to the eukaryotic ribosomal protein eL31 family.

This is Large ribosomal subunit protein eL31 from Methanocorpusculum labreanum (strain ATCC 43576 / DSM 4855 / Z).